A 372-amino-acid polypeptide reads, in one-letter code: Chaperone protein DnaJ (372 aa).

In terms of domain architecture, J spans 5–70; sequence DYYELLEISR…EKKSIYDRYG (66 aa). The CR-type zinc-finger motif lies at 134–211; the sequence is GCNKEINYKY…CKGTGYEEVK (78 aa). Residues cysteine 147, cysteine 150, cysteine 163, cysteine 166, cysteine 185, cysteine 188, cysteine 199, and cysteine 202 each coordinate Zn(2+). 4 CXXCXGXG motif repeats span residues 147 to 154, 163 to 170, 185 to 192, and 199 to 206; these read CKPCEGTG, CPTCKGQG, CPRCGGTG, and CKSCKGTG.

It belongs to the DnaJ family. As to quaternary structure, homodimer. The cofactor is Zn(2+).

The protein localises to the cytoplasm. Its function is as follows. Participates actively in the response to hyperosmotic and heat shock by preventing the aggregation of stress-denatured proteins and by disaggregating proteins, also in an autonomous, DnaK-independent fashion. Unfolded proteins bind initially to DnaJ; upon interaction with the DnaJ-bound protein, DnaK hydrolyzes its bound ATP, resulting in the formation of a stable complex. GrpE releases ADP from DnaK; ATP binding to DnaK triggers the release of the substrate protein, thus completing the reaction cycle. Several rounds of ATP-dependent interactions between DnaJ, DnaK and GrpE are required for fully efficient folding. Also involved, together with DnaK and GrpE, in the DNA replication of plasmids through activation of initiation proteins. The sequence is that of Chaperone protein DnaJ from Aliarcobacter butzleri (strain RM4018) (Arcobacter butzleri).